The sequence spans 435 residues: Endoglucanase EG-1 (435 aa).

The N-terminal stretch at 1–20 is a signal peptide; the sequence is MARGTALLGLTSLLLGLVNG. The residue at position 21 (Q21) is a Pyrrolidone carboxylic acid. Disulfide bonds link C38–C44, C71–C93, and C83–C89. An N-linked (GlcNAc...) asparagine glycan is attached at N109. Disulfide bonds link C160-C385, C192-C215, C196-C214, C235-C254, C243-C248, and C259-C335. E217 functions as the Nucleophile in the catalytic mechanism. Catalysis depends on E222, which acts as the Proton donor. The N-linked (GlcNAc...) asparagine glycan is linked to N267.

This sequence belongs to the glycosyl hydrolase 7 (cellulase C) family.

It localises to the secreted. It carries out the reaction Endohydrolysis of (1-&gt;4)-beta-D-glucosidic linkages in cellulose, lichenin and cereal beta-D-glucans.. Its function is as follows. The biological conversion of cellulose to glucose generally requires three types of hydrolytic enzymes: (1) Endoglucanases which cut internal beta-1,4-glucosidic bonds; (2) Exocellobiohydrolases that cut the disaccharide cellobiose from the non-reducing end of the cellulose polymer chain; (3) Beta-1,4-glucosidases which hydrolyze the cellobiose and other short cello-oligosaccharides to glucose. In Humicola insolens (Soft-rot fungus), this protein is Endoglucanase EG-1 (EG-1).